The chain runs to 149 residues: Inner membrane protein YidI (149 aa).

The Cytoplasmic segment spans residues 1–8 (MGIIAQNK). The chain crosses the membrane as a helical span at residues 9 to 31 (ISSLGMLFGAIALMMGIIHFSFG). Topologically, residues 32–77 (PFSAPPPTFESIVADKTAEIKRGLLAGIKGEKITTVEKKEDVDVDK) are periplasmic. A helical membrane pass occupies residues 78–97 (ILNQSGIALAIAALLCAFIG). Residues 98-117 (GMRKENRWGIRGALVFGGGT) lie on the Cytoplasmic side of the membrane. The chain crosses the membrane as a helical span at residues 118-140 (LAFHTLLFGIGIVCSILLIFLIF). Topologically, residues 141–149 (SFLTGGSLV) are periplasmic.

Its subcellular location is the cell inner membrane. This Escherichia coli (strain K12) protein is Inner membrane protein YidI (yidI).